The following is a 452-amino-acid chain: Gastrin/cholecystokinin type B receptor (452 aa).

Residues 1–55 (MELVKLNRSVQGSGPVASLCRPGGPLLNNSGTGNLSCEPPRIRGAGTRELELAIR) lie on the Extracellular side of the membrane. Residues asparagine 7, asparagine 28, and asparagine 34 are each glycosylated (N-linked (GlcNAc...) asparagine). Residues 56 to 77 (VTLYAVIFLMSVGGNILIIVVL) traverse the membrane as a helical segment. At 78–85 (GLSRRLRT) the chain is on the cytoplasmic side. Residues 86–107 (VTNAFLLSLAVSDLLLAVACMP) form a helical membrane-spanning segment. Topologically, residues 108–129 (FTLLPNLMGTFIFGTVICKAVS) are extracellular. A disulfide bridge connects residues cysteine 125 and cysteine 203. Residues 130–148 (YLMGVSVSVSTLSLVAIAL) form a helical membrane-spanning segment. The Cytoplasmic segment spans residues 149–168 (ERYSAICRPLQARVWQTRSH). A helical membrane pass occupies residues 169 to 187 (AARVILATWLLSGLLMVPY). The Extracellular portion of the chain corresponds to 188 to 217 (PVYTAVQPVGPRVLQCVHRWPSARVRQTWS). A helical transmembrane segment spans residues 218–240 (VLLLLLLFFVPGVVMAVAYGLIS). The Cytoplasmic segment spans residues 241 to 338 (RELYLGLRFD…KLLAKKRVVR (98 aa)). The interval 255–285 (SESQSRVRGQGGLPGGAAPGPVHQNGRCRPE) is disordered. Residues 263–272 (GQGGLPGGAA) are compositionally biased toward gly residues. The chain crosses the membrane as a helical span at residues 339–360 (MLLVIVVLFFMCWLPVYSANTW). Residues 361–378 (RAFDGPGAHRALSGAPIS) lie on the Extracellular side of the membrane. Residues 379–399 (FIHLLSYASACVNPLVYCFMH) traverse the membrane as a helical segment. The Cytoplasmic portion of the chain corresponds to 400–452 (RRFRQACLDTCARCCPRPPRARPRPLPDEDPPTPSIASLSRLSYTTISTLGPG). Residue cysteine 413 is the site of S-palmitoyl cysteine attachment.

Belongs to the G-protein coupled receptor 1 family.

Its subcellular location is the cell membrane. Receptor for gastrin and cholecystokinin. The CCK-B receptors occur throughout the central nervous system where they modulate anxiety, analgesia, arousal, and neuroleptic activity. This receptor mediates its action by association with G proteins that activate a phosphatidylinositol-calcium second messenger system. This is Gastrin/cholecystokinin type B receptor (CCKBR) from Oryctolagus cuniculus (Rabbit).